The primary structure comprises 801 residues: Xaa-Pro dipeptidyl-peptidase (801 aa).

Catalysis depends on charge relay system residues Ser-371, Asp-491, and His-522.

Belongs to the peptidase S15 family. Homodimer.

The protein localises to the cytoplasm. It catalyses the reaction Hydrolyzes Xaa-Pro-|- bonds to release unblocked, N-terminal dipeptides from substrates including Ala-Pro-|-p-nitroanilide and (sequentially) Tyr-Pro-|-Phe-Pro-|-Gly-Pro-|-Ile.. Removes N-terminal dipeptides sequentially from polypeptides having unsubstituted N-termini provided that the penultimate residue is proline. This chain is Xaa-Pro dipeptidyl-peptidase, found in Ligilactobacillus salivarius (strain UCC118) (Lactobacillus salivarius).